A 203-amino-acid chain; its full sequence is Outer-membrane lipoprotein LolB (203 aa).

A signal peptide spans 1-21; the sequence is MTGRWSPRLLAGLLAALVLSG. C22 carries the N-palmitoyl cysteine lipid modification. A lipid anchor (S-diacylglycerol cysteine) is attached at C22.

Belongs to the LolB family. As to quaternary structure, monomer.

The protein resides in the cell outer membrane. Its function is as follows. Plays a critical role in the incorporation of lipoproteins in the outer membrane after they are released by the LolA protein. This Halorhodospira halophila (strain DSM 244 / SL1) (Ectothiorhodospira halophila (strain DSM 244 / SL1)) protein is Outer-membrane lipoprotein LolB.